A 231-amino-acid polypeptide reads, in one-letter code: Sec-independent protein translocase protein TatB (231 aa).

Residues 1-21 (MFDIGFSELLLFGVIALIVLG) form a helical membrane-spanning segment. The segment at 77–168 (MRREMAEMRG…SLKTDFNDNA (92 aa)) is disordered. Residues 101–111 (ASRDLVDDAKP) are compositionally biased toward basic and acidic residues. The span at 148–157 (SEQPSAQGDN) shows a compositional bias: polar residues.

This sequence belongs to the TatB family. In terms of assembly, the Tat system comprises two distinct complexes: a TatABC complex, containing multiple copies of TatA, TatB and TatC subunits, and a separate TatA complex, containing only TatA subunits. Substrates initially bind to the TatABC complex, which probably triggers association of the separate TatA complex to form the active translocon.

The protein localises to the cell inner membrane. Its function is as follows. Part of the twin-arginine translocation (Tat) system that transports large folded proteins containing a characteristic twin-arginine motif in their signal peptide across membranes. Together with TatC, TatB is part of a receptor directly interacting with Tat signal peptides. TatB may form an oligomeric binding site that transiently accommodates folded Tat precursor proteins before their translocation. This Psychrobacter cryohalolentis (strain ATCC BAA-1226 / DSM 17306 / VKM B-2378 / K5) protein is Sec-independent protein translocase protein TatB.